The following is a 288-amino-acid chain: Sulfur carrier protein FdhD (288 aa).

Cysteine 122 functions as the Cysteine persulfide intermediate in the catalytic mechanism. Residue phenylalanine 268–arginine 273 participates in Mo-bis(molybdopterin guanine dinucleotide) binding.

Belongs to the FdhD family.

The protein localises to the cytoplasm. Functionally, required for formate dehydrogenase (FDH) activity. Acts as a sulfur carrier protein that transfers sulfur from IscS to the molybdenum cofactor prior to its insertion into FDH. In Anaeromyxobacter dehalogenans (strain 2CP-C), this protein is Sulfur carrier protein FdhD.